The primary structure comprises 174 residues: MARKPARMWRRLERPYTRTEYIDGAPGTRVRMFDMGNKSADFPVMLTLVAKEAVQIRENALEAARVVANKYVSRRAGASNYKLKLRIFPHHILREHKMAVGAGADRISQGMRAAFGKPVGRAARVKPGTKIMSVWVKPEHFEIAKEALRRAAMKMPTPTKIVVEKGHELLKGKI.

Belongs to the universal ribosomal protein uL16 family.

The chain is Large ribosomal subunit protein uL16 from Archaeoglobus fulgidus (strain ATCC 49558 / DSM 4304 / JCM 9628 / NBRC 100126 / VC-16).